The chain runs to 468 residues: Ubiquitin carboxyl-terminal hydrolase MINDY-1 (468 aa).

Residues 1–19 (MEQPQTENPAPSKATSAET) show a composition bias toward polar residues. The segment at 1-105 (MEQPQTENPA…RPQELPQSPR (105 aa)) is disordered. The span at 22–41 (SENHEALSGPEKHPQDKDGA) shows a compositional bias: basic and acidic residues. Over residues 43–54 (ADGAAGEQEPGD) the composition is skewed to low complexity. Residues 68-80 (CPPPEASSSPPGP) are compositionally biased toward pro residues. Residue Ser-103 is modified to Phosphoserine. Cys-137 functions as the Nucleophile in the catalytic mechanism. The active-site Proton acceptor is the His-319. Positions 388–427 (QVDQDYLIALSLQQQQQPQGTLGLSDLELAQQLQQEEYQQ) are ubiquitin-binding domain (UBD). Residues 423-432 (EEYQQQQAVQ) show a composition bias toward low complexity. The segment at 423 to 468 (EEYQQQQAVQPVRTRAPSPQGRGATSGRPAGERRQRSKTESDCVLL) is disordered. Ser-440 carries the post-translational modification Phosphoserine. The span at 452–468 (AGERRQRSKTESDCVLL) shows a compositional bias: basic and acidic residues.

This sequence belongs to the MINDY deubiquitinase family. FAM63 subfamily.

The catalysed reaction is Thiol-dependent hydrolysis of ester, thioester, amide, peptide and isopeptide bonds formed by the C-terminal Gly of ubiquitin (a 76-residue protein attached to proteins as an intracellular targeting signal).. Its function is as follows. Hydrolase that can specifically remove 'Lys-48'-linked conjugated ubiquitin from proteins. Has exodeubiquitinase activity and has a preference for long polyubiquitin chains. May play a regulatory role at the level of protein turnover. The protein is Ubiquitin carboxyl-terminal hydrolase MINDY-1 (Mindy1) of Mus musculus (Mouse).